Consider the following 121-residue polypeptide: UPF0231 protein ESA_03214 (121 aa).

It belongs to the UPF0231 family.

The protein is UPF0231 protein ESA_03214 of Cronobacter sakazakii (strain ATCC BAA-894) (Enterobacter sakazakii).